Here is a 265-residue protein sequence, read N- to C-terminus: Deoxycytidine kinase 2 (265 aa).

31-39 (GNIAAGKST) contributes to the ATP binding site. Glu56, Tyr89, and Gln100 together coordinate substrate. The active-site Proton acceptor is Glu130. Residues Arg131 and Asp136 each coordinate substrate. Position 191–195 (191–195 (RLQKR)) interacts with ATP. A substrate-binding site is contributed by Glu200. 243–245 (EDF) lines the ATP pocket.

The protein belongs to the DCK/DGK family. Homodimer. As to expression, expressed at high levels in adult intestine, spleen, thymus and testis with lower levels in skeletal muscle and eye. In the embryo, expressed at higher levels until day 10 with lower levels in later stages.

The protein resides in the nucleus. The enzyme catalyses 2'-deoxycytidine + a ribonucleoside 5'-triphosphate = dCMP + a ribonucleoside 5'-diphosphate + H(+). The catalysed reaction is 2'-deoxyguanosine + ATP = dGMP + ADP + H(+). It carries out the reaction 2'-deoxyadenosine + ATP = dAMP + ADP + H(+). In terms of biological role, phosphorylates the deoxyribonucleosides deoxyadenosine, deoxycytidine and deoxyguanosine. Shows highest activity against deoxyguanosine followed by deoxycytidine and then deoxyadenosine. Shows only very minor activity against deoxyuridine and deoxythymidine. The protein is Deoxycytidine kinase 2 of Gallus gallus (Chicken).